The following is a 440-amino-acid chain: Ribosomal protein uS12 methylthiotransferase RimO (440 aa).

Residues 2 to 118 (KKAGIIHLGC…FVSLITSNGE (117 aa)) form the MTTase N-terminal domain. Positions 11, 47, 81, 154, 158, and 161 each coordinate [4Fe-4S] cluster. The Radical SAM core domain maps to 140–370 (ISPNFWVYVK…MSTQKEISKK (231 aa)). The region spanning 373-440 (AKLLGREFDV…RAYDLLGELV (68 aa)) is the TRAM domain.

Belongs to the methylthiotransferase family. RimO subfamily. [4Fe-4S] cluster is required as a cofactor.

It is found in the cytoplasm. It catalyses the reaction L-aspartate(89)-[ribosomal protein uS12]-hydrogen + (sulfur carrier)-SH + AH2 + 2 S-adenosyl-L-methionine = 3-methylsulfanyl-L-aspartate(89)-[ribosomal protein uS12]-hydrogen + (sulfur carrier)-H + 5'-deoxyadenosine + L-methionine + A + S-adenosyl-L-homocysteine + 2 H(+). Its function is as follows. Catalyzes the methylthiolation of an aspartic acid residue of ribosomal protein uS12. The chain is Ribosomal protein uS12 methylthiotransferase RimO from Dictyoglomus thermophilum (strain ATCC 35947 / DSM 3960 / H-6-12).